The following is a 422-amino-acid chain: BTB/POZ domain-containing protein KCTD18 (422 aa).

The BTB domain occupies 12–80 (DILRLNVGGC…YLHGEVHIPT (69 aa)). Disordered stretches follow at residues 289–357 (VKNS…THLP) and 376–422 (LRRT…DQTK). Pro residues predominate over residues 396 to 406 (PAGPPEPPPDA). Residues 413-422 (WTENGQDQTK) show a composition bias toward polar residues.

The polypeptide is BTB/POZ domain-containing protein KCTD18 (KCTD18) (Bos taurus (Bovine)).